Reading from the N-terminus, the 140-residue chain is Sperm protein associated with the nucleus on the X chromosome N3 (140 aa).

Polar residues-rich tracts occupy residues 1–20 (MEQP…CKSN), 62–79 (INSN…SINP), and 131–140 (EGSSQDSGED). The tract at residues 1–140 (MEQPTSSTNG…EGSSQDSGED (140 aa)) is disordered.

This sequence belongs to the SPAN-X family.

The sequence is that of Sperm protein associated with the nucleus on the X chromosome N3 (SPANXN3) from Pan troglodytes (Chimpanzee).